The primary structure comprises 570 residues: Urease subunit alpha (570 aa).

The 438-residue stretch at 133–570 folds into the Urease domain; that stretch reads GGIDNHIHYI…LPLAQLYNLF (438 aa). Residues H138, H140, and K221 each contribute to the Ni(2+) site. The residue at position 221 (K221) is an N6-carboxylysine. Residue H223 coordinates substrate. 2 residues coordinate Ni(2+): H250 and H276. Residue H324 is the Proton donor of the active site. D364 serves as a coordination point for Ni(2+).

This sequence belongs to the metallo-dependent hydrolases superfamily. Urease alpha subunit family. Heterotrimer of UreA (gamma), UreB (beta) and UreC (alpha) subunits. Three heterotrimers associate to form the active enzyme. Requires Ni cation as cofactor. Carboxylation allows a single lysine to coordinate two nickel ions.

The protein resides in the cytoplasm. It carries out the reaction urea + 2 H2O + H(+) = hydrogencarbonate + 2 NH4(+). It participates in nitrogen metabolism; urea degradation; CO(2) and NH(3) from urea (urease route): step 1/1. The chain is Urease subunit alpha from Cytophaga hutchinsonii (strain ATCC 33406 / DSM 1761 / CIP 103989 / NBRC 15051 / NCIMB 9469 / D465).